The sequence spans 459 residues: Exodeoxyribonuclease 7 large subunit (459 aa).

This sequence belongs to the XseA family. Heterooligomer composed of large and small subunits.

Its subcellular location is the cytoplasm. It catalyses the reaction Exonucleolytic cleavage in either 5'- to 3'- or 3'- to 5'-direction to yield nucleoside 5'-phosphates.. In terms of biological role, bidirectionally degrades single-stranded DNA into large acid-insoluble oligonucleotides, which are then degraded further into small acid-soluble oligonucleotides. The chain is Exodeoxyribonuclease 7 large subunit from Yersinia pestis bv. Antiqua (strain Antiqua).